The following is a 115-amino-acid chain: Ig heavy chain V-III region J606 (115 aa).

In terms of domain architecture, Ig-like spans 1–114 (EVKLEESGGG…WGQGTLVTVS (114 aa)). Residues Cys-22 and Cys-98 are joined by a disulfide bond.

The sequence is that of Ig heavy chain V-III region J606 from Mus musculus (Mouse).